A 254-amino-acid chain; its full sequence is Adenosylcobinamide-GDP ribazoletransferase (254 aa).

A run of 7 helical transmembrane segments spans residues 29–49 (LFWF…LGYF), 50–70 (TSLL…GIAL), 98–118 (IMKD…MMLL), 121–141 (IAIL…GVLL), 170–190 (AGVV…FPLL), 198–218 (LYAV…TGLL), and 230–250 (VLGA…ALSA).

This sequence belongs to the CobS family. It depends on Mg(2+) as a cofactor.

Its subcellular location is the cell inner membrane. It carries out the reaction alpha-ribazole + adenosylcob(III)inamide-GDP = adenosylcob(III)alamin + GMP + H(+). It catalyses the reaction alpha-ribazole 5'-phosphate + adenosylcob(III)inamide-GDP = adenosylcob(III)alamin 5'-phosphate + GMP + H(+). It functions in the pathway cofactor biosynthesis; adenosylcobalamin biosynthesis; adenosylcobalamin from cob(II)yrinate a,c-diamide: step 7/7. Functionally, joins adenosylcobinamide-GDP and alpha-ribazole to generate adenosylcobalamin (Ado-cobalamin). Also synthesizes adenosylcobalamin 5'-phosphate from adenosylcobinamide-GDP and alpha-ribazole 5'-phosphate. This Pelodictyon phaeoclathratiforme (strain DSM 5477 / BU-1) protein is Adenosylcobinamide-GDP ribazoletransferase.